The sequence spans 215 residues: Cytochrome c biogenesis ATP-binding export protein CcmA (215 aa).

An ABC transporter domain is found at 3 to 215; it reads LEAENLAGER…MAAFSVEDIA (213 aa). ATP is bound at residue 35 to 42; the sequence is GPNGSGKS.

Belongs to the ABC transporter superfamily. CcmA exporter (TC 3.A.1.107) family. As to quaternary structure, the complex is composed of two ATP-binding proteins (CcmA) and two transmembrane proteins (CcmB).

It localises to the cell inner membrane. It carries out the reaction heme b(in) + ATP + H2O = heme b(out) + ADP + phosphate + H(+). In terms of biological role, part of the ABC transporter complex CcmAB involved in the biogenesis of c-type cytochromes; once thought to export heme, this seems not to be the case, but its exact role is uncertain. Responsible for energy coupling to the transport system. The polypeptide is Cytochrome c biogenesis ATP-binding export protein CcmA (Brucella abortus (strain 2308)).